The following is a 374-amino-acid chain: Chaperone protein DnaJ (374 aa).

The J domain maps to 4–68 (DYYEILGVSR…ETRNRYDRFG (65 aa)). A CR-type zinc finger spans residues 133-215 (GGEKEIRIRH…CGGSGRRQET (83 aa)). Residues Cys146, Cys149, Cys163, Cys166, Cys189, Cys192, Cys203, and Cys206 each coordinate Zn(2+). 4 CXXCXGXG motif repeats span residues 146-153 (CQTCKGSG), 163-170 (CTTCSGTG), 189-196 (CPTCDGAG), and 203-210 (CDVCGGSG).

This sequence belongs to the DnaJ family. In terms of assembly, homodimer. It depends on Zn(2+) as a cofactor.

Its subcellular location is the cytoplasm. Functionally, participates actively in the response to hyperosmotic and heat shock by preventing the aggregation of stress-denatured proteins and by disaggregating proteins, also in an autonomous, DnaK-independent fashion. Unfolded proteins bind initially to DnaJ; upon interaction with the DnaJ-bound protein, DnaK hydrolyzes its bound ATP, resulting in the formation of a stable complex. GrpE releases ADP from DnaK; ATP binding to DnaK triggers the release of the substrate protein, thus completing the reaction cycle. Several rounds of ATP-dependent interactions between DnaJ, DnaK and GrpE are required for fully efficient folding. Also involved, together with DnaK and GrpE, in the DNA replication of plasmids through activation of initiation proteins. This is Chaperone protein DnaJ from Microcystis aeruginosa (strain NIES-843 / IAM M-2473).